Reading from the N-terminus, the 396-residue chain is Elongation factor Tu (396 aa).

The 195-residue stretch at 11 to 205 (KPHVNIGTIG…TVDEYIPTPE (195 aa)) folds into the tr-type G domain. The segment at 20–27 (GHVDHGKT) is G1. GTP is bound at residue 20–27 (GHVDHGKT). T27 is a Mg(2+) binding site. Residues 61 to 65 (GITIN) form a G2 region. A G3 region spans residues 82-85 (DAPG). Residues 82-86 (DAPGH) and 137-140 (NKVD) contribute to the GTP site. Positions 137–140 (NKVD) are G4. The tract at residues 175-177 (SAL) is G5.

Belongs to the TRAFAC class translation factor GTPase superfamily. Classic translation factor GTPase family. EF-Tu/EF-1A subfamily. As to quaternary structure, monomer.

It localises to the cytoplasm. The catalysed reaction is GTP + H2O = GDP + phosphate + H(+). Functionally, GTP hydrolase that promotes the GTP-dependent binding of aminoacyl-tRNA to the A-site of ribosomes during protein biosynthesis. The protein is Elongation factor Tu of Lactobacillus johnsonii (strain CNCM I-12250 / La1 / NCC 533).